The chain runs to 150 residues: Nucleoside diphosphate kinase (150 aa).

Lysine 10, phenylalanine 58, arginine 86, threonine 92, arginine 103, and asparagine 113 together coordinate ATP. The active-site Pros-phosphohistidine intermediate is histidine 116.

This sequence belongs to the NDK family. Mg(2+) serves as cofactor.

The protein localises to the cytoplasm. It catalyses the reaction a 2'-deoxyribonucleoside 5'-diphosphate + ATP = a 2'-deoxyribonucleoside 5'-triphosphate + ADP. The enzyme catalyses a ribonucleoside 5'-diphosphate + ATP = a ribonucleoside 5'-triphosphate + ADP. In terms of biological role, major role in the synthesis of nucleoside triphosphates other than ATP. The ATP gamma phosphate is transferred to the NDP beta phosphate via a ping-pong mechanism, using a phosphorylated active-site intermediate. This is Nucleoside diphosphate kinase from Methanobrevibacter smithii (strain ATCC 35061 / DSM 861 / OCM 144 / PS).